The following is a 327-amino-acid chain: Biotin synthase (327 aa).

One can recognise a Radical SAM core domain in the interval 48 to 278; the sequence is YCGDGVGLCM…DRHITVCGGR (231 aa). [4Fe-4S] cluster-binding residues include cysteine 66, cysteine 70, and cysteine 73. Residues serine 143 and cysteine 203 each coordinate [2Fe-2S] cluster.

The protein belongs to the radical SAM superfamily. Biotin synthase family. In terms of assembly, homodimer. The cofactor is [4Fe-4S] cluster. [2Fe-2S] cluster serves as cofactor.

It carries out the reaction (4R,5S)-dethiobiotin + (sulfur carrier)-SH + 2 reduced [2Fe-2S]-[ferredoxin] + 2 S-adenosyl-L-methionine = (sulfur carrier)-H + biotin + 2 5'-deoxyadenosine + 2 L-methionine + 2 oxidized [2Fe-2S]-[ferredoxin]. Its pathway is cofactor biosynthesis; biotin biosynthesis; biotin from 7,8-diaminononanoate: step 2/2. Functionally, catalyzes the conversion of dethiobiotin (DTB) to biotin by the insertion of a sulfur atom into dethiobiotin via a radical-based mechanism. The polypeptide is Biotin synthase (Syntrophotalea carbinolica (strain DSM 2380 / NBRC 103641 / GraBd1) (Pelobacter carbinolicus)).